We begin with the raw amino-acid sequence, 662 residues long: Potassium channel KAT3 (662 aa).

Residues 1-90 (MSTTTTEARS…HFDRRYRLWE (90 aa)) lie on the Cytoplasmic side of the membrane. Residues 91-111 (LFLVILVGYSAWASLFELAFE) form a helical membrane-spanning segment. Residues 112 to 118 (KAAEGAL) are Extracellular-facing. A helical transmembrane segment spans residues 119–139 (LTIDLVVDFFFAVDIILTFFV). Over 140–163 (SYLDNTTYLNVTDHKLIAKRYLKS) the chain is Cytoplasmic. A helical membrane pass occupies residues 164 to 184 (VAFVMDVASTLPIQFIYKTIT). Residues 185–194 (GDVGRGQAFG) are Extracellular-facing. Residues 195–215 (FLNLLRLWRLRRVAELFKRLE) form a helical; Voltage-sensor membrane-spanning segment. The Cytoplasmic segment spans residues 216–229 (KDAHFNYFVIRVIK). The helical transmembrane segment at 230–250 (LLCVTIFWIHLAGCILYWIAY) threads the bilayer. Residues 251–277 (HYPRPTDTWIGSQVEDFKERSVWLGYT) lie on the Extracellular side of the membrane. Residues 278–297 (YSMYWSIVTLTTVGYGDLHA) constitute an intramembrane region (pore-forming). Residues 298–301 (VNSR) are Extracellular-facing. The helical transmembrane segment at 302–322 (EKTFNMFYMLFNIGLTSYIIG) threads the bilayer. Residues 323–662 (IMTNLVVHGA…LRENDHLYIF (340 aa)) lie on the Cytoplasmic side of the membrane. 406 to 527 (LFKGFPEGLL…MIIANFMTYL (122 aa)) is an a nucleoside 3',5'-cyclic phosphate binding site. Positions 528-558 (KGLNDELKKEIPFLRDLLDDADAQVQETVQS) form a coiled coil. Residues 591-662 (RVIIHGQAPP…LRENDHLYIF (72 aa)) form the KHA domain.

This sequence belongs to the potassium channel family. Plant (TC 1.A.1.4) subfamily. The potassium channel is probably composed of a homo- or heterotetrameric complex of pore-forming subunits. May interact with AKT1 and AKT2. Interacts with SLAC1. In terms of tissue distribution, expressed predominantly in root hairs and root endodermis and, at a lower level, in leaf nodes, trichomes, and hydathodes.

It is found in the membrane. In terms of biological role, probable modulatory (alpha) subunit of inward-rectifying potassium channels. Could mediate potassium uptake from the soil solution by plant roots in association with AKT1. This is Potassium channel KAT3 (KAT3) from Arabidopsis thaliana (Mouse-ear cress).